Here is a 249-residue protein sequence, read N- to C-terminus: Indole-3-glycerol phosphate synthase (249 aa).

The protein belongs to the TrpC family.

It catalyses the reaction 1-(2-carboxyphenylamino)-1-deoxy-D-ribulose 5-phosphate + H(+) = (1S,2R)-1-C-(indol-3-yl)glycerol 3-phosphate + CO2 + H2O. Its pathway is amino-acid biosynthesis; L-tryptophan biosynthesis; L-tryptophan from chorismate: step 4/5. The chain is Indole-3-glycerol phosphate synthase from Pyrobaculum arsenaticum (strain DSM 13514 / JCM 11321 / PZ6).